Here is a 236-residue protein sequence, read N- to C-terminus: E3 ubiquitin-protein ligase RNF187 (236 aa).

Residues 12–53 (CALCQRAPREPVRADCGHRFCRACVVRFWAEEDGPFPCPECA) form an RING-type zinc finger. An asymmetric dimethylarginine; by PRMT1 mark is found at R98 and R109. A Glycyl lysine isopeptide (Lys-Gly) (interchain with G-Cter in ubiquitin) cross-link involves residue K195. The residue at position 200 (S200) is a Phosphoserine. Glycyl lysine isopeptide (Lys-Gly) (interchain with G-Cter in ubiquitin) cross-links involve residues K224 and K225.

As to quaternary structure, homodimer. Interacts with JUN, independently of JUN phosphorylation. Interacts (via C-terminus) with TRIM7. Post-translationally, ubiquitinated; undergoes 'Lys-48'-linked autoubiquitination in the absence of growth factors and MAP3K1-induced 'Lys-63'-linked polyubiquitination. 'Lys-48'-autoubiquitination leads to degradation by the proteasome, while MAP3K1-induced 'Lys-63'-linked polyubiquitination results in the stabilization of the protein. 'Lys-48'- and 'Lys-63'-linked polyubiquitinations occur most probably on the same 3 C-terminal lysine residues (Lys-195, Lys-224 and Lys-225) and are thus mutually exclusive. Other sites of ubiquitination are not excluded. 'Lys-63'-linked polyubiquitination by TRIM7 in response to growth factor signaling via the MEK/ERK pathway enhances protein stability. Arginine methylation by PRMT1 stabilizes RNF187 by facilitating K63-linked ubiquitin chain formation, and enables dimerization, c-Jun interaction and subsequent AP1 target gene expression.

It localises to the cytoplasm. The protein localises to the nucleus. It catalyses the reaction S-ubiquitinyl-[E2 ubiquitin-conjugating enzyme]-L-cysteine + [acceptor protein]-L-lysine = [E2 ubiquitin-conjugating enzyme]-L-cysteine + N(6)-ubiquitinyl-[acceptor protein]-L-lysine.. The protein operates within protein modification; protein ubiquitination. Its function is as follows. E3 ubiquitin-protein ligase that acts as a coactivator of JUN-mediated gene activation in response to growth factor signaling via the MAP3K1 pathway, independently from MAPK8. The protein is E3 ubiquitin-protein ligase RNF187 (Rnf187) of Mus musculus (Mouse).